Here is a 326-residue protein sequence, read N- to C-terminus: DNA-directed RNA polymerase subunit alpha (326 aa).

The tract at residues M1–E231 is alpha N-terminal domain (alpha-NTD). The alpha C-terminal domain (alpha-CTD) stretch occupies residues I245–G326.

This sequence belongs to the RNA polymerase alpha chain family. Homodimer. The RNAP catalytic core consists of 2 alpha, 1 beta, 1 beta' and 1 omega subunit. When a sigma factor is associated with the core the holoenzyme is formed, which can initiate transcription.

The catalysed reaction is RNA(n) + a ribonucleoside 5'-triphosphate = RNA(n+1) + diphosphate. DNA-dependent RNA polymerase catalyzes the transcription of DNA into RNA using the four ribonucleoside triphosphates as substrates. The chain is DNA-directed RNA polymerase subunit alpha from Azoarcus sp. (strain BH72).